The sequence spans 246 residues: Phycocyanobilin:ferredoxin oxidoreductase (246 aa).

The protein belongs to the HY2 family.

The enzyme catalyses (2R,3Z)-phycocyanobilin + 4 oxidized [2Fe-2S]-[ferredoxin] = biliverdin IXalpha + 4 reduced [2Fe-2S]-[ferredoxin] + 4 H(+). Its function is as follows. Catalyzes the four-electron reduction of biliverdin IX-alpha (2-electron reduction at both the A and D rings); the reaction proceeds via an isolatable 2-electron intermediate, 181,182-dihydrobiliverdin. In Synechococcus sp. (strain CC9902), this protein is Phycocyanobilin:ferredoxin oxidoreductase.